The chain runs to 954 residues: Glycine dehydrogenase (decarboxylating) (954 aa).

Residue Lys701 is modified to N6-(pyridoxal phosphate)lysine.

This sequence belongs to the GcvP family. In terms of assembly, the glycine cleavage system is composed of four proteins: P, T, L and H. Pyridoxal 5'-phosphate is required as a cofactor.

The enzyme catalyses N(6)-[(R)-lipoyl]-L-lysyl-[glycine-cleavage complex H protein] + glycine + H(+) = N(6)-[(R)-S(8)-aminomethyldihydrolipoyl]-L-lysyl-[glycine-cleavage complex H protein] + CO2. In terms of biological role, the glycine cleavage system catalyzes the degradation of glycine. The P protein binds the alpha-amino group of glycine through its pyridoxal phosphate cofactor; CO(2) is released and the remaining methylamine moiety is then transferred to the lipoamide cofactor of the H protein. This chain is Glycine dehydrogenase (decarboxylating), found in Bordetella parapertussis (strain 12822 / ATCC BAA-587 / NCTC 13253).